Consider the following 828-residue polypeptide: MRPRPEGRGLRAGVALSPALLLLLLLPPPPTLLGRLWAAGTPSPSAPGARQDGALGAGRVKRGWVWNQFFVVEEYTGTEPLYVGKIHSDSDEGDGAIKYTISGEGAGTIFLIDELTGDIHAMERLDREQKTFYTLRAQARDRATNRLLEPESEFIIKVQDINDSEPRFLHGPYIGSVAELSPTGTSVMQVMASDADDPTYGSSARLVYSVLDGEHHFTVDPKTGVIRTAVPDLDRESQERYEVVIQATDMAGQLGGLSGSTTVTIVVTDVNDNPPRFPQKMYQFSIQESAPIGTAVGRVKAEDSDVGENTDMTYHLKDESSSGGDVFKVTTDSDTQEAIIVVQKRLDFESQPVHTVILEALNKFVDPRFADLGTFRDQAIVRVAVTDVDEPPEFRPPSGLLEVQEDAQVGSLVGVVTARDPDAANRPVRYAIDRESDLDQIFDIDADTGAIVTGKGLDRETAGWHNITVLAMEADNHAQLSRASLRIRILDVNDNPPELATPYEAAVCEDAKPGQLIQTISVVDRDEPQGGHRFYFRLVPEAPSNPHFSLLDIQDNTAAVHTQHVGFNRQEQDVFFLPILVVDSGPPTLSSTGTLTIRICGCDSSGTIQSCNTTAFVMAASLSPGALIALLVCVLILVVLVLLILTLRRHHKSHLSSDEDEDMRDNVIKYNDEGGGEQDTEAYDMSALRSLYDFGELKGGDGGGSAGGGAGGGSGGGAGSPPQAHLPSERHSLPQGPPSPEPDFSVFRDFISRKVALADGDLSVPPYDAFQTYAFEGADSPAASLSSLHSGSSGSEQDFAYLSSWGPRFRPLAALYAGHRGDDEAQAS.

An N-terminal signal peptide occupies residues 1–34 (MRPRPEGRGLRAGVALSPALLLLLLLPPPPTLLG). At 36-624 (LWAAGTPSPS…AFVMAASLSP (589 aa)) the chain is on the extracellular side. Cadherin domains are found at residues 64 to 168 (WVWN…EPRF), 169 to 277 (LHGP…PPRF), 278 to 394 (PQKM…PPEF), 395 to 498 (RPPS…NPPE), and 499 to 616 (LATP…TTAF). A glycan (N-linked (GlcNAc...) asparagine) is linked at Asn162. 2 N-linked (GlcNAc...) asparagine glycosylation sites follow: Asn466 and Asn612. A helical transmembrane segment spans residues 625–645 (GALIALLVCVLILVVLVLLIL). Residues 646–828 (TLRRHHKSHL…HRGDDEAQAS (183 aa)) lie on the Cytoplasmic side of the membrane. Positions 702–719 (GGGSAGGGAGGGSGGGAG) are enriched in gly residues. Positions 702–745 (GGGSAGGGAGGGSGGGAGSPPQAHLPSERHSLPQGPPSPEPDFS) are disordered.

It is found in the cell membrane. Functionally, cadherins are calcium-dependent cell adhesion proteins. They preferentially interact with themselves in a homophilic manner in connecting cells; cadherins may thus contribute to the sorting of heterogeneous cell types. PB-cadherins may have a role in the morphological organization of pituitary gland and brain tissues. In Homo sapiens (Human), this protein is Cadherin-22 (CDH22).